The sequence spans 128 residues: RYamide neuropeptides (128 aa).

The first 23 residues, 1–23 (MHARKLIVVLVYILTVLVSVAVS), serve as a signal peptide directing secretion. Positions 26-29 (YTSE) are excised as a propeptide. Tyr-44 carries the post-translational modification Tyrosine amide. A propeptide spanning residues 47–63 (GGPSPNNKENKVNIRPR) is cleaved from the precursor. Residue Tyr-73 is modified to Tyrosine amide. A propeptide spanning residues 77 to 128 (SGWSPNASLVYPVSTPLCGLDEDLSCAYTGISDLYRCTPRKGESEEFTTSSN) is cleaved from the precursor.

It localises to the secreted. Neuropeptides RYamide-1 and RYamide-2 are ligands for the G-protein coupled receptor RYa-R. RYamide-2 is the most potent activator of RYa-R. The protein is RYamide neuropeptides of Tribolium castaneum (Red flour beetle).